The primary structure comprises 379 residues: Cytochrome b (379 aa).

4 consecutive transmembrane segments (helical) span residues 33–53 (FGSL…FLAM), 77–98 (WLIR…FIHV), 113–133 (WNIG…GYVL), and 178–198 (FFAF…VHLL). The heme b site is built by histidine 83 and histidine 97. 2 residues coordinate heme b: histidine 182 and histidine 196. Histidine 201 contributes to the a ubiquinone binding site. A run of 4 helical transmembrane segments spans residues 226-246 (IKDL…ALFF), 288-308 (LGGV…PLLN), 320-340 (ITQT…WIGG), and 347-367 (FTTI…IIMP).

Belongs to the cytochrome b family. As to quaternary structure, the cytochrome bc1 complex contains 11 subunits: 3 respiratory subunits (MT-CYB, CYC1 and UQCRFS1), 2 core proteins (UQCRC1 and UQCRC2) and 6 low-molecular weight proteins (UQCRH/QCR6, UQCRB/QCR7, UQCRQ/QCR8, UQCR10/QCR9, UQCR11/QCR10 and a cleavage product of UQCRFS1). This cytochrome bc1 complex then forms a dimer. Requires heme b as cofactor.

It is found in the mitochondrion inner membrane. Functionally, component of the ubiquinol-cytochrome c reductase complex (complex III or cytochrome b-c1 complex) that is part of the mitochondrial respiratory chain. The b-c1 complex mediates electron transfer from ubiquinol to cytochrome c. Contributes to the generation of a proton gradient across the mitochondrial membrane that is then used for ATP synthesis. The chain is Cytochrome b (MT-CYB) from Deltamys kempi (Kemp's grass mouse).